The primary structure comprises 82 residues: Small ribosomal subunit protein bS18 (82 aa).

Residues 1 to 20 (MVDINQIPTRRPFHRRHKTC) are disordered.

The protein belongs to the bacterial ribosomal protein bS18 family. In terms of assembly, part of the 30S ribosomal subunit. Forms a tight heterodimer with protein bS6.

Its function is as follows. Binds as a heterodimer with protein bS6 to the central domain of the 16S rRNA, where it helps stabilize the platform of the 30S subunit. This chain is Small ribosomal subunit protein bS18, found in Brucella suis (strain ATCC 23445 / NCTC 10510).